The chain runs to 122 residues: Large ribosomal subunit protein uL14 (122 aa).

This sequence belongs to the universal ribosomal protein uL14 family. In terms of assembly, part of the 50S ribosomal subunit. Forms a cluster with proteins L3 and L19. In the 70S ribosome, L14 and L19 interact and together make contacts with the 16S rRNA in bridges B5 and B8.

Its function is as follows. Binds to 23S rRNA. Forms part of two intersubunit bridges in the 70S ribosome. The chain is Large ribosomal subunit protein uL14 from Campylobacter fetus subsp. fetus (strain 82-40).